The following is a 1397-amino-acid chain: MAQTGEDVDKAKSFQVEFACGNGVDDEEKLRSQWATVERLPTFKRVTTALLHTGDDSSDIIDVTKLEDAERRLLIEKLVKQIEADNLRLLRKIRKRIDEVGIELPTVEVRFNDLSVEAECQVVHGKPIPTLWNTIKGSLSKFVCSKKETKIGILKGVSGIVRPGRMTLLLGPPGCGKTTLLQALSGRLSHSVKVGGKVSYNGCLLSEFIPEKTSSYISQNDLHIPELSVRETLDFSACCQGIGSRMEIMKEISRREKLKEIVPDPDIDAYMKAISVEGLKNSMQTDYILKILGLDICADTRAGDATRPGISGGQKRRLTTGEIVVGPATTLLMDEISNGLDSSTTFQIVSCLQQLAHIAGATILISLLQPAPETFELFDDVILLGEGKIIYHAPRADICKFFEGCGFKCPERKGVADFLQEVMSRKDQEQYWCHRSKPYSYISVDSFIKKFNESNLGFLLKEELSKPFDKSQTRKDSLCFRKYSLSKWEMLKACSRREILLMKRNSFIYLFKSGLLVFNALVTMTVFLQAGATRDARHGNYLMGSMFTALFRLLADGLPELTLTISRLGVFCKQKDLYFYPAWAYAIPSIILRIPLSVLDSFIWTVLTYYVIGYSPEVGRFFRHFIILLTFHLSCISMFRAIASICRTFVACSITGAISVLLLALFGGFVIPKSSMPTWLGWGFWLSPLSYAEIGLTANEFFSPRWRKLTSGNITAGEQVLDVRGLNFGRHSYWTAFGALVGFVLFFNALYTLALTYRNNPQRSRAIVSHGKNSQCSEEDFKPCPEITSRAKTGKVILPFKPLTVTFQNVQYYIETPQGKTRQLLFDITGALKPGVLTSLMGVSGAGKTTLLDVLSGRKTRGIIKGEIRVGGYPKVQETFARVSGYCEQFDIHSPNITVEESLKYSAWLRLPYNIDAKTKNELVKEVLETVELEDIKDSMVGLPGISGLSTEQRKRLTIAVELVSNPSIIFLDEPTTGLDARAAAIVMRAVKNVAETGRTVVCTIHQPSIDIFETFDELILMKDGGQLVYYGPLGKHSSKVIKYFESIPGVPKVQKNCNPATWMLDITCKSAEHRLGMDFAQAYKDSTLYKENKMVVEQLSSASLGSEALSFPSRYSQTGWGQLKACLWKQHCSYWRNPSHNLTRIVFILLNSLLCSLLFWQKAKDINNQQDLFSIFGSMYTIVIFSGINNCATVMNFIATERNVFYRERFARMYSSWAYSFSQVLVEVPYSLLQSLLCTIIVYPMIGYHMSVYKMFWSLYSIFCSLLIFNYCGMLMVALTPNIHMALTLRSTFFSMVNLFAGFVMPKQKIPKWWIWMYYLSPTSWVLEGLLSSQYGDVEKEITVFGEKKSVSAFLEDYFGYKHDSLAVVAFVLIAFPIIVASLFAFFMSKLNFQKK.

The region spanning 138–411 (SLSKFVCSKK…FEGCGFKCPE (274 aa)) is the ABC transporter 1 domain. An ATP-binding site is contributed by 171-178 (GPPGCGKT). The ABC transmembrane type-2 1 domain occupies 489–701 (EMLKACSRRE…AEIGLTANEF (213 aa)). The next 6 helical transmembrane spans lie at 507 to 527 (FIYL…MTVF), 549 to 570 (ALFR…RLGV), 594 to 614 (IPLS…VIGY), 625 to 645 (FIIL…IASI), 651 to 671 (ACSI…GFVI), and 735 to 755 (TAFG…TLAL). The region spanning 805 to 1050 (VTFQNVQYYI…VIKYFESIPG (246 aa)) is the ABC transporter 2 domain. Position 842–849 (842–849 (GVSGAGKT)) interacts with ATP. In terms of domain architecture, ABC transmembrane type-2 2 spans 1122–1336 (GQLKACLWKQ…VLEGLLSSQY (215 aa)). The next 7 helical transmembrane spans lie at 1141-1161 (HNLT…LLFW), 1173-1193 (LFSI…NNCA), 1229-1249 (VPYS…MIGY), 1260-1280 (LYSI…MVAL), 1286-1306 (MALT…GFVM), 1314-1334 (WWIW…LLSS), and 1369-1389 (VVAF…AFFM).

The protein belongs to the ABC transporter superfamily. ABCG family. PDR (TC 3.A.1.205) subfamily. Confined to roots.

It is found in the membrane. Its function is as follows. May be a general defense protein. The sequence is that of ABC transporter G family member 41 (ABCG41) from Arabidopsis thaliana (Mouse-ear cress).